The following is a 197-amino-acid chain: RILP-like protein 2 (197 aa).

In terms of domain architecture, RH1 spans 14-96 (EDEGALAKSP…KQEVEGLRRA (83 aa)). A coiled-coil region spans residues 65-153 (LEALVNEGSL…VQEELQCYRS (89 aa)). The RH2 domain maps to 119–184 (RPRFTLQELR…GNGEKEERTI (66 aa)).

As to quaternary structure, homodimer. Interacts (via N-terminus) with MYO5A, the interaction is required for its role in dendrite formation. Interacts with RAC1. Interacts with RAB8A; interaction is dependent on the phosphorylation of RAB8A on 'Thr-72'. Interacts with RAB10 and RAB12; interaction is dependent on the phosphorylation of 'Thr-73' on RAB10 and 'Ser-105' on RAB12.

Its subcellular location is the cytoplasm. It is found in the cytosol. The protein resides in the cytoskeleton. The protein localises to the microtubule organizing center. It localises to the centrosome. Its subcellular location is the cell projection. It is found in the cilium. In terms of biological role, involved in cell shape and neuronal morphogenesis, positively regulating the establishment and maintenance of dendritic spines. Plays a role in cellular protein transport, including protein transport away from primary cilia. May function via activation of RAC1 and PAK1. The polypeptide is RILP-like protein 2 (Rilpl2) (Rattus norvegicus (Rat)).